The primary structure comprises 370 residues: Phosphoribosylformylglycinamidine cyclo-ligase (370 aa).

The protein belongs to the AIR synthase family.

Its subcellular location is the cytoplasm. The catalysed reaction is 2-formamido-N(1)-(5-O-phospho-beta-D-ribosyl)acetamidine + ATP = 5-amino-1-(5-phospho-beta-D-ribosyl)imidazole + ADP + phosphate + H(+). The protein operates within purine metabolism; IMP biosynthesis via de novo pathway; 5-amino-1-(5-phospho-D-ribosyl)imidazole from N(2)-formyl-N(1)-(5-phospho-D-ribosyl)glycinamide: step 2/2. The polypeptide is Phosphoribosylformylglycinamidine cyclo-ligase (Rhodospirillum rubrum (strain ATCC 11170 / ATH 1.1.1 / DSM 467 / LMG 4362 / NCIMB 8255 / S1)).